A 68-amino-acid chain; its full sequence is U1-hexatoxin-Hv1a (68 aa).

Disulfide bonds link Cys-3/Cys-14, Cys-8/Cys-22, Cys-13/Cys-48, Cys-32/Cys-56, and Cys-50/Cys-63.

It belongs to the MIT-like AcTx family. As to expression, expressed by the venom gland.

Its subcellular location is the secreted. In Hadronyche versuta (Blue mountains funnel-web spider), this protein is U1-hexatoxin-Hv1a.